Here is a 309-residue protein sequence, read N- to C-terminus: Diadenylate cyclase (309 aa).

A DAC domain is found at Thr-144–Pro-301.

Belongs to the adenylate cyclase family. DacZ subfamily. Requires Mn(2+) as cofactor.

It catalyses the reaction 2 ATP = 3',3'-c-di-AMP + 2 diphosphate. Its function is as follows. Diadenylate cyclase that catalyzes the condensation of 2 ATP molecules into cyclic di-AMP (c-di-AMP). c-di-AMP is a second messenger for intracellular signal transduction involved in the control of important regulatory processes such as osmoregulation. This chain is Diadenylate cyclase, found in Methanocaldococcus jannaschii (strain ATCC 43067 / DSM 2661 / JAL-1 / JCM 10045 / NBRC 100440) (Methanococcus jannaschii).